The following is a 231-amino-acid chain: D-allulose-6-phosphate 3-epimerase (231 aa).

Serine 6 contributes to the substrate binding site. Residues histidine 30, aspartate 32, and histidine 63 each coordinate a divalent metal cation. Residue aspartate 32 is the Proton acceptor of the active site. Residues histidine 63, 140-143 (GFAG), 173-175 (DGS), and 195-197 (GTS) each bind substrate. Aspartate 173 is an a divalent metal cation binding site. Aspartate 173 acts as the Proton donor in catalysis.

This sequence belongs to the ribulose-phosphate 3-epimerase family. AlsE subfamily. As to quaternary structure, homohexamer. Trimer of dimers. It depends on Co(2+) as a cofactor. The cofactor is Mn(2+). Zn(2+) serves as cofactor.

It carries out the reaction D-allulose 6-phosphate = keto-D-fructose 6-phosphate. It functions in the pathway carbohydrate degradation; D-allose degradation. Catalyzes the reversible epimerization of D-allulose 6-phosphate to D-fructose 6-phosphate. Can also catalyze with lower efficiency the reversible epimerization of D-ribulose 5-phosphate to D-xylulose 5-phosphate. The protein is D-allulose-6-phosphate 3-epimerase of Escherichia coli (strain K12).